A 357-amino-acid polypeptide reads, in one-letter code: Ketoreductase CTB6 (357 aa).

An NADP(+)-binding site is contributed by tyrosine 172.

The protein belongs to the NAD(P)-dependent epimerase/dehydratase family. Dihydroflavonol-4-reductase subfamily.

The protein operates within mycotoxin biosynthesis. Its function is as follows. Ketoreductase; part of the gene cluster that mediates the biosynthesis of cercosporin, a light-activated, non-host-selective toxin. The perylenequinone chromophore of cercosporin absorbs light energy to attain an electronically-activated triplet state and produces active oxygen species such as the hydroxyl radical, superoxide, hydrogen peroxide or singlet oxygen upon reaction with oxygen molecules. These reactive oxygen species cause damage to various cellular components including lipids, proteins and nucleic acids. The first step of cercosporin biosynthesis is performed by the polyketide synthase CTB1 which catalyzes the formation of nor-toralactone. The starter unit acyltransferase (SAT) domain of CTB1 initiates polyketide extension by the selective utilization of acetyl-CoA, which is elongated to the heptaketide in the beta-ketoacyl synthase (KS) domain by successive condensations with six malonyl units introduced by the malonyl acyltransferase (MAT) domain. The product template (PT) domain catalyzes C4-C9 and C2-C11 aldol cyclizations and dehydrations to a trihydroxynaphthalene, which is thought to be delivered to the thioesterase (TE) domain for product release. The bifunctional enzyme CTB3 then methylates nor-toralactone to toralactone before conducting an unusual oxidative aromatic ring opening. The O-methyltransferase CTB2 further methylates the nascent OH-6 of the CBT3 product, blocking further oxidation at this site before the reductase CTB6 reduces the 2-oxopropyl ketone at position C7, giving naphthalene. The FAD-dependent monooxygenase CTB5 in concert with the multicopper oxidase CTB12 are responsible for homodimerization of naphthalene with CTB7 installing the dioxepine moiety, finally producing cercosporin. The fasciclin domain-containing protein CTB11 might act with CTB5 and CTB12 whereas the roles of CTB9 and CTB10 have still to be elucidated. In Cercospora nicotianae (Barn spot disease fungus), this protein is Ketoreductase CTB6.